We begin with the raw amino-acid sequence, 266 residues long: Putative carbamate hydrolase RutD (266 aa).

In terms of domain architecture, AB hydrolase-1 spans 14–115; the sequence is PVVVLISGLG…TMLVSVNGWL (102 aa).

Belongs to the AB hydrolase superfamily. Hydrolase RutD family.

The catalysed reaction is carbamate + 2 H(+) = NH4(+) + CO2. In terms of biological role, involved in pyrimidine catabolism. May facilitate the hydrolysis of carbamate, a reaction that can also occur spontaneously. This is Putative carbamate hydrolase RutD from Shigella flexneri serotype 5b (strain 8401).